A 99-amino-acid chain; its full sequence is Apolipoprotein C-III (99 aa).

The first 20 residues, 1–20 (MQPRTLLTVALLALLASARA), serve as a signal peptide directing secretion. Met-63 carries the post-translational modification Methionine sulfoxide. A lipid-binding region spans residues 68-99 (RFLKGYWSKFTDKFTGFWDSNPEDQPTPAIES). An O-linked (GalNAc...) threonine glycan is attached at Thr-94.

The protein belongs to the apolipoprotein C3 family. Post-translationally, the most abundant glycoforms are characterized by an O-linked disaccharide galactose linked to N-acetylgalactosamine (Gal-GalNAc), further modified with up to 3 sialic acid residues. Less abundant glycoforms are characterized by more complex and fucosylated glycan moieties. O-glycosylated on Thr-94 with a core 1 or possibly core 8 glycan.

The protein resides in the secreted. Functionally, component of triglyceride-rich very low density lipoproteins (VLDL) and high density lipoproteins (HDL) in plasma. Plays a multifaceted role in triglyceride homeostasis. Intracellularly, promotes hepatic very low density lipoprotein 1 (VLDL1) assembly and secretion; extracellularly, attenuates hydrolysis and clearance of triglyceride-rich lipoproteins (TRLs). Impairs the lipolysis of TRLs by inhibiting lipoprotein lipase and the hepatic uptake of TRLs by remnant receptors. Formed of several curved helices connected via semiflexible hinges, so that it can wrap tightly around the curved micelle surface and easily adapt to the different diameters of its natural binding partners. In Mus musculus (Mouse), this protein is Apolipoprotein C-III (Apoc3).